The chain runs to 132 residues: Small ribosomal subunit protein uS8 (132 aa).

Belongs to the universal ribosomal protein uS8 family. Part of the 30S ribosomal subunit. Contacts proteins S5 and S12.

Functionally, one of the primary rRNA binding proteins, it binds directly to 16S rRNA central domain where it helps coordinate assembly of the platform of the 30S subunit. The sequence is that of Small ribosomal subunit protein uS8 from Arthrobacter sp. (strain FB24).